We begin with the raw amino-acid sequence, 237 residues long: Large ribosomal subunit protein uL3 (237 aa).

2 disordered regions span residues 133–155 and 213–237; these read ASHG…DPGK and PENA…EGAE. Polar residues predominate over residues 135–150; it reads HGNSITHRSHGSTGQR. The residue at position 151 (Gln151) is an N5-methylglutamine. Low complexity predominate over residues 220–237; the sequence is AGLRAGAKAEAAATEGAE.

The protein belongs to the universal ribosomal protein uL3 family. Part of the 50S ribosomal subunit. Forms a cluster with proteins L14 and L19. Methylated by PrmB.

In terms of biological role, one of the primary rRNA binding proteins, it binds directly near the 3'-end of the 23S rRNA, where it nucleates assembly of the 50S subunit. The chain is Large ribosomal subunit protein uL3 from Brucella suis biovar 1 (strain 1330).